Reading from the N-terminus, the 578-residue chain is MNILELSEQEVVRRNSLEQLRNLGIDPYPAAEYTVNAYSTEIKRNFNGDENAAKRQVSIAGRIMSRRIMGKATFMELQDAEGRIQIYITRDDICPGEDKEFYNTVVKKCTDIGDFIGVKGYVFRTQMGEISVHVQEMTFLSKAIRPLPVVKEKDGEVFDGFTDSEQRYRQRYVDLVVNSHVKDIFLKRTMVFNSMRSFFNERGYIEVDTPVLQSIPGGAAARPFITHHNALDIPLYLRIANELYLKRLIVGGFDGVYEFSRNFRNEGMDRTHNPEFTAMEIYVAYKDYNWMMNFTEQMLERICMDVLGTTQVKVGEKLIDFKAPYRRVTMIEAIHEHTGIDISGMNEAELRQVCDKLGVEHNETMGKGKLIDEIFGEKCEKNYIQPTFITDYPKEMSPLTKEHRTNPELTERFELMVNGKELANAYSELNDPIDQRERFEEQLKLSEKGDDEAMYIDNDFIRALEYGMPPTSGMGIGMDRLVMLLTGQESIQEVLLFPQMKPEKVAPRDTKEKFAVCGIPEEWVPVLHKAGYLTVQSMREDKPGKVMQQLMDINKKYKLGLAGLNLETVSAWQEAPYE.

Positions 414 and 421 each coordinate Mg(2+).

It belongs to the class-II aminoacyl-tRNA synthetase family. Homodimer. It depends on Mg(2+) as a cofactor.

It is found in the cytoplasm. The enzyme catalyses tRNA(Lys) + L-lysine + ATP = L-lysyl-tRNA(Lys) + AMP + diphosphate. The polypeptide is Lysine--tRNA ligase (Porphyromonas gingivalis (strain ATCC 33277 / DSM 20709 / CIP 103683 / JCM 12257 / NCTC 11834 / 2561)).